Reading from the N-terminus, the 364-residue chain is Tyrosine--tRNA ligase (364 aa).

L-tyrosine contacts are provided by Y41, Y167, Q171, D174, and Q189. The 'KMSKS' region signature appears at 238–242; it reads KMSKS. K241 contributes to the ATP binding site.

The protein belongs to the class-I aminoacyl-tRNA synthetase family. TyrS type 4 subfamily. As to quaternary structure, homodimer.

Its subcellular location is the cytoplasm. The enzyme catalyses tRNA(Tyr) + L-tyrosine + ATP = L-tyrosyl-tRNA(Tyr) + AMP + diphosphate + H(+). Its function is as follows. Catalyzes the attachment of tyrosine to tRNA(Tyr) in a two-step reaction: tyrosine is first activated by ATP to form Tyr-AMP and then transferred to the acceptor end of tRNA(Tyr). The chain is Tyrosine--tRNA ligase from Sulfurisphaera tokodaii (strain DSM 16993 / JCM 10545 / NBRC 100140 / 7) (Sulfolobus tokodaii).